Here is a 327-residue protein sequence, read N- to C-terminus: GMP reductase (327 aa).

Cys175 serves as the catalytic Thioimidate intermediate. 204-227 (IIADGGIRTHGDIAKSIRFGASMV) provides a ligand contact to NADP(+).

Belongs to the IMPDH/GMPR family. GuaC type 2 subfamily.

The catalysed reaction is IMP + NH4(+) + NADP(+) = GMP + NADPH + 2 H(+). In terms of biological role, catalyzes the irreversible NADPH-dependent deamination of GMP to IMP. It functions in the conversion of nucleobase, nucleoside and nucleotide derivatives of G to A nucleotides, and in maintaining the intracellular balance of A and G nucleotides. The sequence is that of GMP reductase from Oceanobacillus iheyensis (strain DSM 14371 / CIP 107618 / JCM 11309 / KCTC 3954 / HTE831).